The primary structure comprises 404 residues: Cysteine desulfurase IscS (404 aa).

Pyridoxal 5'-phosphate is bound by residues 75–76, Asn-155, Gln-183, and 203–205; these read AT and SGH. Lys-206 carries the post-translational modification N6-(pyridoxal phosphate)lysine. Thr-243 lines the pyridoxal 5'-phosphate pocket. Cys-328 functions as the Cysteine persulfide intermediate in the catalytic mechanism. Residue Cys-328 coordinates [2Fe-2S] cluster.

This sequence belongs to the class-V pyridoxal-phosphate-dependent aminotransferase family. NifS/IscS subfamily. In terms of assembly, homodimer. Forms a heterotetramer with IscU, interacts with other sulfur acceptors. The cofactor is pyridoxal 5'-phosphate.

Its subcellular location is the cytoplasm. It carries out the reaction (sulfur carrier)-H + L-cysteine = (sulfur carrier)-SH + L-alanine. It participates in cofactor biosynthesis; iron-sulfur cluster biosynthesis. Its function is as follows. Master enzyme that delivers sulfur to a number of partners involved in Fe-S cluster assembly, tRNA modification or cofactor biosynthesis. Catalyzes the removal of elemental sulfur atoms from cysteine to produce alanine. Functions as a sulfur delivery protein for Fe-S cluster synthesis onto IscU, an Fe-S scaffold assembly protein, as well as other S acceptor proteins. This Shewanella baltica (strain OS155 / ATCC BAA-1091) protein is Cysteine desulfurase IscS.